We begin with the raw amino-acid sequence, 430 residues long: MSSRSPRPPPRRSRRRLPRPSCCCCCCRRSHLNEDTGRFVLLAALIGLYLVAGATVFSALESPGEAEARARWGATLRNFSAAHGVAEPELRAFLRHYEAALAAGVRADALRPRWDFPGAFYFVGTVVSTIGFGMTTPATVGGKAFLIAYGLFGCAGTILFFNLFLERIISLLAFIMRACRERQLRRSGLLPATFRRGSALSEADSLAGWKPSVYHVLLILGLFAVLLSCCASAMYTSVEGWDYVDSLYFCFVTFSTIGFGDLVSSQHAAYRNQGLYRLGNFLFILLGVCCIYSLFNVISILIKQVLNWMLRKLSCRCCARCCPAPGAPLARRNAITPGSRLRRRLAALGADPAARDSDAEGRRLSGELISMRDLTASNKVSLALLQKQLSETANGYPRSVCVNTRQNGFSGGVGALGIMNNRLAETSASR.

The Cytoplasmic portion of the chain corresponds to Met-1–Arg-38. The segment at Arg-11 to Arg-16 is ER retention/retrieval signal. The chain crosses the membrane as a helical span at residues Phe-39–Ala-59. A glycan (N-linked (GlcNAc...) asparagine) is linked at Asn-78. Positions Trp-114–Met-134 form an intramembrane region, pore-forming. Positions 129, 130, and 131 each coordinate K(+). A selectivity filter 1 region spans residues Thr-129–Met-134. The helical transmembrane segment at Phe-145 to Leu-165 threads the bilayer. The Cytoplasmic segment spans residues Glu-166–Ser-212. Residues Val-213 to Ala-233 traverse the membrane as a helical segment. Residues Tyr-243–Val-263 constitute an intramembrane region (pore-forming). K(+)-binding residues include Thr-256, Ile-257, Gly-258, and Phe-259. Residues Thr-256–Asp-261 form a selectivity filter 2 region. The helical transmembrane segment at Leu-282 to Ile-302 threads the bilayer. The Cytoplasmic portion of the chain corresponds to Lys-303–Arg-430.

Belongs to the two pore domain potassium channel (TC 1.A.1.8) family. Homodimer. Heterodimer with KCNK13.

It is found in the cell membrane. The protein resides in the endoplasmic reticulum membrane. It carries out the reaction K(+)(in) = K(+)(out). Its function is as follows. K(+) channel subunit that may homo- and heterodimerize to form functional channels with distinct regulatory and gating properties. Can heterodimerize with KCNK13 subunit to conduct K(+) outward rectifying currents at the plasma membrane. The homodimers are mainly retained in the endoplasmic reticulum compartment and may be targeted to the cell surface upon phosphorylation or other activation signals yet to be elucidated. In Homo sapiens (Human), this protein is Potassium channel subfamily K member 12.